Reading from the N-terminus, the 625-residue chain is Arginine--tRNA ligase (625 aa).

Residues 117–127 (ANPIHPLHIGH) carry the 'HIGH' region motif.

This sequence belongs to the class-I aminoacyl-tRNA synthetase family.

The protein resides in the cytoplasm. The enzyme catalyses tRNA(Arg) + L-arginine + ATP = L-arginyl-tRNA(Arg) + AMP + diphosphate. The chain is Arginine--tRNA ligase from Saccharolobus solfataricus (strain ATCC 35092 / DSM 1617 / JCM 11322 / P2) (Sulfolobus solfataricus).